The chain runs to 231 residues: 2,3-bisphosphoglycerate-dependent phosphoglycerate mutase (231 aa).

Substrate is bound by residues 10 to 17 (RHGQSEWN), 23 to 24 (TG), R62, 89 to 92 (ERHY), K100, 116 to 117 (RR), and 185 to 186 (GN). Catalysis depends on H11, which acts as the Tele-phosphohistidine intermediate. Residue E89 is the Proton donor/acceptor of the active site.

The protein belongs to the phosphoglycerate mutase family. BPG-dependent PGAM subfamily. As to quaternary structure, homodimer.

The catalysed reaction is (2R)-2-phosphoglycerate = (2R)-3-phosphoglycerate. It functions in the pathway carbohydrate degradation; glycolysis; pyruvate from D-glyceraldehyde 3-phosphate: step 3/5. Catalyzes the interconversion of 2-phosphoglycerate and 3-phosphoglycerate. The protein is 2,3-bisphosphoglycerate-dependent phosphoglycerate mutase of Buchnera aphidicola subsp. Acyrthosiphon pisum (strain 5A).